The sequence spans 396 residues: Phosphopentomutase (396 aa).

Positions 13, 288, 293, 329, 330, and 341 each coordinate Mn(2+).

The protein belongs to the phosphopentomutase family. Mn(2+) is required as a cofactor.

The protein localises to the cytoplasm. It carries out the reaction 2-deoxy-alpha-D-ribose 1-phosphate = 2-deoxy-D-ribose 5-phosphate. It catalyses the reaction alpha-D-ribose 1-phosphate = D-ribose 5-phosphate. The protein operates within carbohydrate degradation; 2-deoxy-D-ribose 1-phosphate degradation; D-glyceraldehyde 3-phosphate and acetaldehyde from 2-deoxy-alpha-D-ribose 1-phosphate: step 1/2. Its function is as follows. Isomerase that catalyzes the conversion of deoxy-ribose 1-phosphate (dRib-1-P) and ribose 1-phosphate (Rib-1-P) to deoxy-ribose 5-phosphate (dRib-5-P) and ribose 5-phosphate (Rib-5-P), respectively. The sequence is that of Phosphopentomutase from Clostridium botulinum (strain Alaska E43 / Type E3).